We begin with the raw amino-acid sequence, 527 residues long: Inosine-5'-monophosphate dehydrogenase (527 aa).

2 CBS domains span residues 121–183 and 184–240; these read FILD…VTAV and MSTD…PLAS. Residues 277 to 279 and 327 to 329 each bind NAD(+); these read DSS and GMG. Gly329 and Gly331 together coordinate K(+). Ser332 provides a ligand contact to IMP. Position 334 (Cys334) interacts with K(+). Cys334 acts as the Thioimidate intermediate in catalysis. Residues 367–369 and 390–391 each bind IMP; these read DGG and GS. Residue Arg440 is the Proton acceptor of the active site. Gln452 is an IMP binding site. The interval 506-527 is disordered; the sequence is ASAQTEGNVHGLHSHEKKLYSS. The K(+) site is built by Glu511 and Gly512. Over residues 518 to 527 the composition is skewed to basic and acidic residues; that stretch reads HSHEKKLYSS.

This sequence belongs to the IMPDH/GMPR family. Homotetramer. K(+) is required as a cofactor.

The protein resides in the cytoplasm. The catalysed reaction is IMP + NAD(+) + H2O = XMP + NADH + H(+). The protein operates within purine metabolism; XMP biosynthesis via de novo pathway; XMP from IMP: step 1/1. Its activity is regulated as follows. Mycophenolic acid (MPA) is a non-competitive inhibitor that prevents formation of the closed enzyme conformation by binding to the same site as the amobile flap. In contrast, mizoribine monophosphate (MZP) is a competitive inhibitor that induces the closed conformation. MPA is a potent inhibitor of mammalian IMPDHs but a poor inhibitor of the bacterial enzymes. MZP is a more potent inhibitor of bacterial IMPDH. Catalyzes the conversion of inosine 5'-phosphate (IMP) to xanthosine 5'-phosphate (XMP), the first committed and rate-limiting step in the de novo synthesis of guanine nucleotides, and therefore plays an important role in the regulation of cell growth. Part of the gene cluster that mediates the biosynthesis of mycophenolic acid (MPA), the first isolated antibiotic natural product in the world. Does not play a role in the biosynthesis of MPA, but is involved in self resistance to MPA, since MPA acts as an inhibitor of IMP dehydrogenases. In Penicillium brevicompactum, this protein is Inosine-5'-monophosphate dehydrogenase.